A 445-amino-acid polypeptide reads, in one-letter code: MSHSDHTAPLEARLSAALSGTARVPGDKSISHRALILGALAVGETRISGLLEGEDVLNTARAMRALGAQVERTGDCAWSVHGVGVAGFAPPAAPLDFGNSGTGCRLAMGAVAGSPIIATFDGDASLRSRPMRRIVDPLEQMGARVTQSADGGRLPLTLQGARDPLPITYRTPVPSAQIKSAVLLAGLSAPGVTTVIEAEASRDHTELMLQHFGATVVTEPEGPHGRKISLTGQPELRGAPVVVPADPSSAAFPMVAALIVPGSDVVLTEVMTNPLRTGLITTLREMGGLIEESETRGDAGEPMARFRIRGSQLRGVEVPPERAPSMIDEYLVLAVAAAFAEGTTIMRGLHELRVKESDRLEATAAMLRVNGVTVEISGDDLIVEGKGHVPGGGLVATHMDHRIAMSALVMGLAADKPVRVDDTAFIATSFPDFVPMMQRLGAEFG.

3-phosphoshikimate-binding residues include Lys-28, Ser-29, and Arg-33. A phosphoenolpyruvate-binding site is contributed by Lys-28. Residues Gly-101 and Arg-129 each coordinate phosphoenolpyruvate. 3-phosphoshikimate-binding residues include Ser-175, Gln-177, Asp-328, and Lys-355. Gln-177 is a phosphoenolpyruvate binding site. Catalysis depends on Asp-328, which acts as the Proton acceptor. 2 residues coordinate phosphoenolpyruvate: Arg-359 and Arg-402.

It belongs to the EPSP synthase family. As to quaternary structure, monomer.

The protein resides in the cytoplasm. The catalysed reaction is 3-phosphoshikimate + phosphoenolpyruvate = 5-O-(1-carboxyvinyl)-3-phosphoshikimate + phosphate. It participates in metabolic intermediate biosynthesis; chorismate biosynthesis; chorismate from D-erythrose 4-phosphate and phosphoenolpyruvate: step 6/7. In terms of biological role, catalyzes the transfer of the enolpyruvyl moiety of phosphoenolpyruvate (PEP) to the 5-hydroxyl of shikimate-3-phosphate (S3P) to produce enolpyruvyl shikimate-3-phosphate and inorganic phosphate. In Rhodopseudomonas palustris (strain HaA2), this protein is 3-phosphoshikimate 1-carboxyvinyltransferase.